We begin with the raw amino-acid sequence, 640 residues long: 1-deoxy-D-xylulose-5-phosphate synthase (640 aa).

Thiamine diphosphate is bound by residues His78 and 119-121 (GHS). Residue Asp151 coordinates Mg(2+). Residues 152–153 (GA), Asn180, Tyr289, and Glu371 each bind thiamine diphosphate. Asn180 lines the Mg(2+) pocket.

This sequence belongs to the transketolase family. DXPS subfamily. As to quaternary structure, homodimer. It depends on Mg(2+) as a cofactor. The cofactor is thiamine diphosphate.

It catalyses the reaction D-glyceraldehyde 3-phosphate + pyruvate + H(+) = 1-deoxy-D-xylulose 5-phosphate + CO2. It participates in metabolic intermediate biosynthesis; 1-deoxy-D-xylulose 5-phosphate biosynthesis; 1-deoxy-D-xylulose 5-phosphate from D-glyceraldehyde 3-phosphate and pyruvate: step 1/1. In terms of biological role, catalyzes the acyloin condensation reaction between C atoms 2 and 3 of pyruvate and glyceraldehyde 3-phosphate to yield 1-deoxy-D-xylulose-5-phosphate (DXP). This is 1-deoxy-D-xylulose-5-phosphate synthase from Bartonella henselae (strain ATCC 49882 / DSM 28221 / CCUG 30454 / Houston 1) (Rochalimaea henselae).